Reading from the N-terminus, the 711-residue chain is Polyribonucleotide nucleotidyltransferase (711 aa).

Mg(2+) contacts are provided by Asp-486 and Asp-492. The KH domain maps to 553–612 (PRIHTIKINPDKIKDVIGKGGSVIRALTEETGTTIEIEDDGTVKIAATDGEKAKHAIRRI). Residues 622-690 (GRVYTGKVTR…RQGRIRLSIK (69 aa)) enclose the S1 motif domain. Positions 689-711 (IKEATEQSQPAAAPEAPAAEQGE) are disordered. Residues 694-711 (EQSQPAAAPEAPAAEQGE) are compositionally biased toward low complexity.

It belongs to the polyribonucleotide nucleotidyltransferase family. In terms of assembly, component of the RNA degradosome, which is a multiprotein complex involved in RNA processing and mRNA degradation. It depends on Mg(2+) as a cofactor.

The protein resides in the cytoplasm. The enzyme catalyses RNA(n+1) + phosphate = RNA(n) + a ribonucleoside 5'-diphosphate. Involved in mRNA degradation. Catalyzes the phosphorolysis of single-stranded polyribonucleotides processively in the 3'- to 5'-direction. This chain is Polyribonucleotide nucleotidyltransferase, found in Escherichia coli O8 (strain IAI1).